The following is a 392-amino-acid chain: DNA replication and repair protein RecF (392 aa).

30–37 is a binding site for ATP; that stretch reads GPNAAGKT.

This sequence belongs to the RecF family.

It is found in the cytoplasm. In terms of biological role, the RecF protein is involved in DNA metabolism; it is required for DNA replication and normal SOS inducibility. RecF binds preferentially to single-stranded, linear DNA. It also seems to bind ATP. This Chloroflexus aurantiacus (strain ATCC 29364 / DSM 637 / Y-400-fl) protein is DNA replication and repair protein RecF.